A 691-amino-acid chain; its full sequence is Probable serine/threonine-protein kinase pXi (691 aa).

A Protein kinase domain is found at 18-263 (YEIGSQIGNG…IDQTLKHPWI (246 aa)). ATP-binding positions include 24-32 (IGNGKFAQV) and Lys47. The active-site Proton acceptor is Asp137. Disordered regions lie at residues 314-350 (TPIKSNDENNNNNNNNNNNNNNNEILDKKSNENENEN), 420-447 (ENDSSSSETYSSSSPIENGGGGGDKFTS), 510-536 (QHNNNINNNNNNINNGGSTSINNGNGT), and 600-620 (GGSGCSSSSDESTGGSFKKDK). Residues 322 to 336 (NNNNNNNNNNNNNNN) show a composition bias toward low complexity. Positions 338–350 (ILDKKSNENENEN) are enriched in basic and acidic residues. Low complexity-rich tracts occupy residues 423–433 (SSSSETYSSSS), 512–536 (NNNINNNNNNINNGGSTSINNGNGT), and 600–615 (GGSGCSSSSDESTGGS). Positions 642–691 (PKETMDKLASVLSNYKQKNQEKSLKVKYEKQKDKYKKLKSQLKKDKSLLK) form a coiled coil.

Belongs to the protein kinase superfamily. CAMK Ser/Thr protein kinase family.

It catalyses the reaction L-seryl-[protein] + ATP = O-phospho-L-seryl-[protein] + ADP + H(+). It carries out the reaction L-threonyl-[protein] + ATP = O-phospho-L-threonyl-[protein] + ADP + H(+). This chain is Probable serine/threonine-protein kinase pXi (pXi), found in Dictyostelium discoideum (Social amoeba).